The following is a 252-amino-acid chain: Imidazole glycerol phosphate synthase subunit HisF (252 aa).

Catalysis depends on residues Asp-12 and Asp-131.

Belongs to the HisA/HisF family. Heterodimer of HisH and HisF.

The protein resides in the cytoplasm. It carries out the reaction 5-[(5-phospho-1-deoxy-D-ribulos-1-ylimino)methylamino]-1-(5-phospho-beta-D-ribosyl)imidazole-4-carboxamide + L-glutamine = D-erythro-1-(imidazol-4-yl)glycerol 3-phosphate + 5-amino-1-(5-phospho-beta-D-ribosyl)imidazole-4-carboxamide + L-glutamate + H(+). It participates in amino-acid biosynthesis; L-histidine biosynthesis; L-histidine from 5-phospho-alpha-D-ribose 1-diphosphate: step 5/9. Its function is as follows. IGPS catalyzes the conversion of PRFAR and glutamine to IGP, AICAR and glutamate. The HisF subunit catalyzes the cyclization activity that produces IGP and AICAR from PRFAR using the ammonia provided by the HisH subunit. The chain is Imidazole glycerol phosphate synthase subunit HisF from Thermus thermophilus (strain ATCC BAA-163 / DSM 7039 / HB27).